We begin with the raw amino-acid sequence, 372 residues long: O-glycoside alpha-1,2-mannosyltransferase homolog 2 (372 aa).

At 1-6 (MRISRL) the chain is on the cytoplasmic side. Residues 7–27 (LIRVLLGFVILFITYILFPSI) traverse the membrane as a helical; Signal-anchor for type II membrane protein segment. Topologically, residues 28 to 372 (PKALVNTLNV…NLTNEDYDEL (345 aa)) are lumenal. Glu-271 acts as the Nucleophile in catalysis.

Belongs to the glycosyltransferase 15 family.

The protein localises to the endoplasmic reticulum membrane. Functionally, probable mannosyltransferase involved in O-glycosylation of cell wall and secreted proteins. The sequence is that of O-glycoside alpha-1,2-mannosyltransferase homolog 2 (omh2) from Schizosaccharomyces pombe (strain 972 / ATCC 24843) (Fission yeast).